The chain runs to 359 residues: Endoglucanase (359 aa).

Positions 1–23 (MPLRALVAVIVTTAVMLVPRAWA) are cleaved as a signal peptide. Glutamate 53 acts as the Proton donor in catalysis. The active-site Nucleophile is aspartate 110.

The protein belongs to the glycosyl hydrolase 8 (cellulase D) family.

The enzyme catalyses Endohydrolysis of (1-&gt;4)-beta-D-glucosidic linkages in cellulose, lichenin and cereal beta-D-glucans.. Its function is as follows. The biological conversion of cellulose to glucose generally requires three types of hydrolytic enzymes: (1) Endoglucanases which cut internal beta-1,4-glucosidic bonds; (2) Exocellobiohydrolases that cut the disaccharide cellobiose from the non-reducing end of the cellulose polymer chain; (3) Beta-1,4-glucosidases which hydrolyze the cellobiose and other short cello-oligosaccharides to glucose. This is Endoglucanase from Cellulomonas uda.